Consider the following 1710-residue polypeptide: MNGHSDEESVRNSSGESSQSDDDSGSASGSGSGSSSGSSSDGSSSQSGSSDSDSGSESGSQSESESDTSRENKVQAKPPKVDGAEFWKSSPSILAVQRSAILKKQQQQQQQQQHQASSNSGSEEDSSSSEDSDDSSSEVKRKKHKDEDWQMSGSGSPSQSGSDSESEEEREKSSCDETESDYEPKNKVKSRKPQNRSKSKNGKKILGQKKRQIDSSEEDDDEEDYDNDKRSSRRQATVNVSYKEDEEMKTDSDDLLEVCGEDVPQPEEEEFETIERFMDCRIGRKGATGATTTIYAVEADGDPNAGFEKNKEPGEIQYLIKWKGWSHIHNTWETEETLKQQNVRGMKKLDNYKKKDQETKRWLKNASPEDVEYYNCQQELTDDLHKQYQIVERIIAHSNQKSAAGYPDYYCKWQGLPYSECSWEDGALISKKFQACIDEYFSRNQSKTTPFKDCKVLKQRPRFVALKKQPSYIGGHEGLELRDYQLNGLNWLAHSWCKGNSCILADEMGLGKTIQTISFLNYLFHEHQLYGPFLLVVPLSTLTSWQREIQTWASQMNAVVYLGDINSRNMIRTHEWTHHQTKRLKFNILLTTYEILLKDKAFLGGLNWAFIGVDEAHRLKNDDSLLYKTLIDFKSNHRLLITGTPLQNSLKELWSLLHFIMPEKFSSWEDFEEEHGKGREYGYASLHKELEPFLLRRVKKDVEKSLPAKVEQILRMEMSALQKQYYKWILTRNYKALSKGSKGSTSGFLNIMMELKKCCNHCYLIKPPDNNEFYNKQEALQHLIRSSGKLILLDKLLIRLRERGNRVLIFSQMVRMLDILAEYLKYRQFPFQRLDGSIKGELRKQALDHFNAEGSEDFCFLLSTRAGGLGINLASADTVVIFDSDWNPQNDLQAQARAHRIGQKKQVNIYRLVTKGSVEEDILERAKKKMVLDHLVIQRMDTTGKTVLHTGSAPSSSTPFNKEELSAILKFGAEELFKEPEGEEQEPQEMDIDEILKRAETHENEPGPLTVGDELLSQFKVANFSNMDEDDIELEPERNSKNWEEIIPEDQRRRLEEEERQKELEEIYMLPRMRNCAKQISFNGSEGRRSRSRRYSGSDSDSISEGKRPKKRGRPRTIPRENIKGFSDAEIRRFIKSYKKFGGPLERLDAIARDAELVDKSETDLRRLGELVHNGCIKALKDSSSGTERTGGRLGKVKGPTFRISGVQVNAKLVISHEEELIPLHKSIPSDPEERKQYTIPCHTKAAHFDIDWGKEDDSNLLIGIYEYGYGSWEMIKMDPDLSLTHKILPDDPDKKPQAKQLQTRADYLIKLLSRDLAKKEALSGAGSSKRRKARAKKNKAMKSIKVKEEIKSDSSPLPSEKSDEDDDKLSESKSDGRERSKKSSVSDAPVHITASGEPVPISEESEELDQKTFSICKERMRPVKAALKQLDRPEKGLSEREQLEHTRQCLIKIGDHITECLKEYTNPEQIKQWRKNLWIFVSKFTEFDARKLHKLYKHAIKKRQESQQNSDQNSNLNPHVIRNPDVERLKENTNHDDSSRDSYSSDRHLTQYHDHHKDRHQGDSYKKSDSRKRPYSSFSNGKDHRDWDHYKQDSRYYSDREKHRKLDDHRSRDHRSNLEGSLKDRSHSDHRSHSDHRLHSDHRSSSEYTHHKSSRDYRYHSDWQMDHRASSSGPRSPLDQRSPYGSRSPFEHSVEHKSTPEHTWSSRKT.

The span at 1–10 shows a compositional bias: basic and acidic residues; that stretch reads MNGHSDEESV. A disordered region spans residues 1-252; that stretch reads MNGHSDEESV…KEDEEMKTDS (252 aa). The span at 35–63 shows a compositional bias: low complexity; sequence SSGSSSDGSSSQSGSSDSDSGSESGSQSE. Basic and acidic residues predominate over residues 67-85; that stretch reads DTSRENKVQAKPPKVDGAE. A compositionally biased stretch (low complexity) spans 105 to 121; the sequence is QQQQQQQQQHQASSNSG. A compositionally biased stretch (acidic residues) spans 122 to 136; it reads SEEDSSSSEDSDDSS. Positions 152-163 are enriched in low complexity; the sequence is SGSGSPSQSGSD. Residues 187-210 are compositionally biased toward basic residues; sequence KVKSRKPQNRSKSKNGKKILGQKK. Phosphoserine is present on residues S215 and S216. The span at 215–226 shows a compositional bias: acidic residues; it reads SSEEDDDEEDYD. T237 is modified (phosphothreonine). At S241 the chain carries Phosphoserine. The residue at position 250 (T250) is a Phosphothreonine. S252 is subject to Phosphoserine. 2 consecutive Chromo domains span residues 272 to 364 and 389 to 452; these read ETIE…RWLK and QIVE…TPFK. Phosphoserine is present on S471. The Helicase ATP-binding domain maps to 493-663; that stretch reads AHSWCKGNSC…WSLLHFIMPE (171 aa). 506 to 513 provides a ligand contact to ATP; the sequence is DEMGLGKT. The short motif at 614 to 617 is the DEAH box element; that stretch reads DEAH. A Helicase C-terminal domain is found at 792–943; that stretch reads LLDKLLIRLR…HLVIQRMDTT (152 aa). A phosphoserine mark is found at S1025, S1040, S1081, S1085, S1096, S1098, S1100, and S1102. Residues 1080 to 1120 are disordered; the sequence is ISFNGSEGRRSRSRRYSGSDSDSISEGKRPKKRGRPRTIPR. The segment covering 1108–1117 has biased composition (basic residues); it reads RPKKRGRPRT. S1161 carries the phosphoserine modification. Disordered stretches follow at residues 1321–1408 and 1502–1710; these read EALS…ESEE and KKRQ…SRKT. A compositionally biased stretch (basic residues) spans 1329 to 1345; it reads SKRRKARAKKNKAMKSI. Residues S1353, S1355, S1356, S1360, S1363, S1371, and S1373 each carry the phosphoserine modification. Basic and acidic residues predominate over residues 1370 to 1379; that stretch reads LSESKSDGRE. Positions 1409-1511 are CHD1 helical C-terminal domain (CHCT); sequence LDQKTFSICK…KKRQESQQNS (103 aa). Positions 1507–1516 are enriched in low complexity; it reads SQQNSDQNSN. Basic and acidic residues-rich tracts occupy residues 1523 to 1573 and 1582 to 1670; these read RNPD…DSRK and GKDH…DHRA. S1622 bears the Phosphoserine mark. Tandem repeats lie at residues 1628–1632, 1634–1638, and 1640–1644. Residues 1628–1644 are 3 X 5 AA repeats of H-S-D-H-R; that stretch reads HSDHRSHSDHRLHSDHR. S1677, R1688, and S1689 each carry phosphoserine. A compositionally biased stretch (basic and acidic residues) spans 1690-1701; the sequence is PFEHSVEHKSTP.

It belongs to the SNF2/RAD54 helicase family. Component of the SAGA complex. Interacts with BCLAF1, NCoR, SRP20 and SAFB. Specifically interacts with methylated H3K4me2 and H3K4me3. Interacts with the FACT complex, the PAF complex and the U2 snRNP. Interacts directly with PAF1, SFA3A1, SFA3A2, SFA3A3, SNF2 and SSRP1. Expressed in many tissues including in the brain, where the highest level of expression is found in the cerebellum and basal ganglia.

The protein resides in the nucleus. Its subcellular location is the cytoplasm. The catalysed reaction is ATP + H2O = ADP + phosphate + H(+). ATP-dependent chromatin-remodeling factor which functions as substrate recognition component of the transcription regulatory histone acetylation (HAT) complex SAGA. Regulates polymerase II transcription. Also required for efficient transcription by RNA polymerase I, and more specifically the polymerase I transcription termination step. Regulates negatively DNA replication. Not only involved in transcription-related chromatin-remodeling, but also required to maintain a specific chromatin configuration across the genome. Is also associated with histone deacetylase (HDAC) activity. Required for the bridging of SNF2, the FACT complex, the PAF complex as well as the U2 snRNP complex to H3K4me3. Functions to modulate the efficiency of pre-mRNA splicing in part through physical bridging of spliceosomal components to H3K4me3. Required for maintaining open chromatin and pluripotency in embryonic stem cells. The protein is Chromodomain-helicase-DNA-binding protein 1 of Homo sapiens (Human).